The primary structure comprises 769 residues: Endonuclease MutS2 (769 aa).

Residue 335–342 (GGNAGGKT) coordinates ATP. Residues 694–769 (IDLRGKRADV…GDGMTEVELV (76 aa)) enclose the Smr domain.

It belongs to the DNA mismatch repair MutS family. MutS2 subfamily. In terms of assembly, homodimer. Binds to stalled ribosomes, contacting rRNA.

Its function is as follows. Endonuclease that is involved in the suppression of homologous recombination and thus may have a key role in the control of bacterial genetic diversity. Functionally, acts as a ribosome collision sensor, splitting the ribosome into its 2 subunits. Detects stalled/collided 70S ribosomes which it binds and splits by an ATP-hydrolysis driven conformational change. Acts upstream of the ribosome quality control system (RQC), a ribosome-associated complex that mediates the extraction of incompletely synthesized nascent chains from stalled ribosomes and their subsequent degradation. Probably generates substrates for RQC. The sequence is that of Endonuclease MutS2 from Maridesulfovibrio salexigens (strain ATCC 14822 / DSM 2638 / NCIMB 8403 / VKM B-1763) (Desulfovibrio salexigens).